The following is a 302-amino-acid chain: MSDALYESSIQSLPLLGKGKVRDNYAVGDDKLLIVTTDRLSAFDVILGEPIPAKGRVLNQMANFWFKKLAHIVPNHETDVTAESVVAPNEVEQVKGRAVVVKRLKPILVEAVVRGYLAGSGWKDYQATGKVCGIALPAGLQNAQKLPEPIFTPAAKAEMGEHDENISFDEVEARIGKELAAKMRDISIRLYKEAADYAATRGIIIADTKFEFGLDENGTLTLMDEVLTADSSRFWPADSYQVGTNPPSFDKQFVRDWLEAVRIDGKPWPKTAPAPKLPEDVVQKTADKYKEALTRLTGEALQ.

This sequence belongs to the SAICAR synthetase family.

The catalysed reaction is 5-amino-1-(5-phospho-D-ribosyl)imidazole-4-carboxylate + L-aspartate + ATP = (2S)-2-[5-amino-1-(5-phospho-beta-D-ribosyl)imidazole-4-carboxamido]succinate + ADP + phosphate + 2 H(+). It participates in purine metabolism; IMP biosynthesis via de novo pathway; 5-amino-1-(5-phospho-D-ribosyl)imidazole-4-carboxamide from 5-amino-1-(5-phospho-D-ribosyl)imidazole-4-carboxylate: step 1/2. This is Phosphoribosylaminoimidazole-succinocarboxamide synthase from Cupriavidus metallidurans (strain ATCC 43123 / DSM 2839 / NBRC 102507 / CH34) (Ralstonia metallidurans).